The primary structure comprises 160 residues: Inorganic pyrophosphatase (160 aa).

Residues Lys-16, Arg-28, and Tyr-40 each contribute to the substrate site. The Mg(2+) site is built by Asp-50, Asp-55, and Asp-87. Tyr-126 is a substrate binding site.

The protein belongs to the PPase family. Homohexamer. The cofactor is Mg(2+).

It localises to the cytoplasm. It catalyses the reaction diphosphate + H2O = 2 phosphate + H(+). Functionally, catalyzes the hydrolysis of inorganic pyrophosphate (PPi) forming two phosphate ions. The protein is Inorganic pyrophosphatase of Nanoarchaeum equitans (strain Kin4-M).